The following is a 72-amino-acid chain: Mitochondrial import protein 2 (72 aa).

A disordered region spans residues 1 to 22 (MAEVLDLEIDPISDGEDDTYSS). The Cytoplasmic segment spans residues 1 to 34 (MAEVLDLEIDPISDGEDDTYSSELDDDLKDSIEQ). A helical membrane pass occupies residues 35–52 (LERVLCLVVFPLLGKFLG). The Mitochondrial intermembrane portion of the chain corresponds to 53–72 (RKFAFHAWARWLERRRLVSN).

It belongs to the MIM2 family. As to quaternary structure, component of the mitochondrial outer import machinery (MIM) complex containing at least mim1 and mim2. Interacts with mim1. Interacts with mitophagy receptor atg43.

It is found in the mitochondrion outer membrane. Functionally, component of the mitochondrial outer import machinery (MIM) complex that mediates transport of proteins into mitochondrial compartments. Promotes the insertion of tom70 into the outer mitochondrial membrane. Promotes the insertion of atg43 into the outer mitochondrial membrane. Involved in import of the subset of proteins with multiple alpha-helical transmembrane segments. The sequence is that of Mitochondrial import protein 2 from Schizosaccharomyces pombe (strain 972 / ATCC 24843) (Fission yeast).